Consider the following 89-residue polypeptide: MAYTTEVKKELISKFKVHDADTGSPEVQIALLTHRITYLTEHVKVHKKDHHSRRGLLILVGKRRKLLNYVKNKDVNRYRDIISTLGLRR.

The protein belongs to the universal ribosomal protein uS15 family. In terms of assembly, part of the 30S ribosomal subunit. Forms a bridge to the 50S subunit in the 70S ribosome, contacting the 23S rRNA.

Its function is as follows. One of the primary rRNA binding proteins, it binds directly to 16S rRNA where it helps nucleate assembly of the platform of the 30S subunit by binding and bridging several RNA helices of the 16S rRNA. Forms an intersubunit bridge (bridge B4) with the 23S rRNA of the 50S subunit in the ribosome. The chain is Small ribosomal subunit protein uS15 from Desulfosudis oleivorans (strain DSM 6200 / JCM 39069 / Hxd3) (Desulfococcus oleovorans).